Reading from the N-terminus, the 735-residue chain is Photosystem I P700 chlorophyll a apoprotein A2 (735 aa).

Helical transmembrane passes span 47–70, 136–159, 176–200, 274–292, 331–354, 370–396, 418–440, and 518–536; these read IFASHFGQLAIIFLWTSGNLFHVA, LFTGSVFLALVSAVFLFAGWLHLQ, LNHHLSGLFGVSSLAWTGHLVHVAI, MAHHHLAIAVIFIVAGHMY, LHFQLGLALASVGTITSMIAQHIY, AALYTHHQYIAGFIMCGAFAHGAIFFI, AIISHLSWVTLFLGFHTLGLYVH, and FLVHHAIALGLHTTTLILV. C560 and C569 together coordinate [4Fe-4S] cluster. 2 consecutive transmembrane segments (helical) span residues 576–597 and 644–666; these read AFYLAVFWMLNTIGWVTFYFHW and LSVWAFCFLFGHLIYATGFMFLI. Chlorophyll a-binding residues include H655, M663, and Y671. W672 lines the phylloquinone pocket. The helical transmembrane segment at 708-728 threads the bilayer; that stretch reads LVGLVHFSVGYIFTYAAFLIA.

The protein belongs to the PsaA/PsaB family. The PsaA/B heterodimer binds the P700 chlorophyll special pair and subsequent electron acceptors. PSI consists of a core antenna complex that captures photons, and an electron transfer chain that converts photonic excitation into a charge separation. The eukaryotic PSI reaction center is composed of at least 11 subunits. P700 is a chlorophyll a/chlorophyll a' dimer, A0 is one or more chlorophyll a, A1 is one or both phylloquinones and FX is a shared 4Fe-4S iron-sulfur center. serves as cofactor.

Its subcellular location is the plastid. It is found in the chloroplast thylakoid membrane. It carries out the reaction reduced [plastocyanin] + hnu + oxidized [2Fe-2S]-[ferredoxin] = oxidized [plastocyanin] + reduced [2Fe-2S]-[ferredoxin]. PsaA and PsaB bind P700, the primary electron donor of photosystem I (PSI), as well as the electron acceptors A0, A1 and FX. PSI is a plastocyanin/cytochrome c6-ferredoxin oxidoreductase, converting photonic excitation into a charge separation, which transfers an electron from the donor P700 chlorophyll pair to the spectroscopically characterized acceptors A0, A1, FX, FA and FB in turn. Oxidized P700 is reduced on the lumenal side of the thylakoid membrane by plastocyanin or cytochrome c6. In Chlamydomonas moewusii (Chlamydomonas eugametos), this protein is Photosystem I P700 chlorophyll a apoprotein A2.